The chain runs to 121 residues: Large ribosomal subunit protein uL18 (121 aa).

The protein belongs to the universal ribosomal protein uL18 family. As to quaternary structure, part of the 50S ribosomal subunit; part of the 5S rRNA/L5/L18/L25 subcomplex. Contacts the 5S and 23S rRNAs.

Its function is as follows. This is one of the proteins that bind and probably mediate the attachment of the 5S RNA into the large ribosomal subunit, where it forms part of the central protuberance. In Herpetosiphon aurantiacus (strain ATCC 23779 / DSM 785 / 114-95), this protein is Large ribosomal subunit protein uL18.